The primary structure comprises 488 residues: ATP synthase subunit beta (488 aa).

164 to 171 (GGAGVGKT) is an ATP binding site.

The protein belongs to the ATPase alpha/beta chains family. As to quaternary structure, F-type ATPases have 2 components, CF(1) - the catalytic core - and CF(0) - the membrane proton channel. CF(1) has five subunits: alpha(3), beta(3), gamma(1), delta(1), epsilon(1). CF(0) has four main subunits: a(1), b(1), b'(1) and c(9-12).

The protein localises to the cellular thylakoid membrane. The enzyme catalyses ATP + H2O + 4 H(+)(in) = ADP + phosphate + 5 H(+)(out). Produces ATP from ADP in the presence of a proton gradient across the membrane. The catalytic sites are hosted primarily by the beta subunits. The polypeptide is ATP synthase subunit beta (Prochlorococcus marinus (strain MIT 9211)).